A 1007-amino-acid polypeptide reads, in one-letter code: Beta-galactosidase A (1007 aa).

The N-terminal stretch at 1-18 (MKLSSACAIALLAAQAAG) is a signal peptide. Residues Tyr96 and 140 to 142 (NAE) contribute to the substrate site. Asn156 is a glycosylation site (N-linked (GlcNAc...) asparagine). Asn199 is a substrate binding site. Glu200 serves as the catalytic Proton donor. 2 disulfides stabilise this stretch: Cys205–Cys206 and Cys266–Cys315. The active-site Nucleophile is the Glu298. A substrate-binding site is contributed by Tyr364. N-linked (GlcNAc...) asparagine glycosylation is found at Asn402, Asn422, Asn478, Asn522, Asn622, Asn739, Asn760, Asn777, Asn805, and Asn914.

It belongs to the glycosyl hydrolase 35 family.

It is found in the secreted. It carries out the reaction Hydrolysis of terminal non-reducing beta-D-galactose residues in beta-D-galactosides.. Its function is as follows. Cleaves beta-linked terminal galactosyl residues from gangliosides, glycoproteins, and glycosaminoglycans. The polypeptide is Beta-galactosidase A (lacA) (Aspergillus niger (strain ATCC MYA-4892 / CBS 513.88 / FGSC A1513)).